Reading from the N-terminus, the 202-residue chain is Protein Thf1 (202 aa).

Positions 174-202 form a coiled coil; that stretch reads IYKSSILKMEQAKELLQEAKIKDKKEKKK.

It belongs to the THF1 family.

May be involved in photosynthetic membrane biogenesis. In Prochlorococcus marinus subsp. pastoris (strain CCMP1986 / NIES-2087 / MED4), this protein is Protein Thf1.